The following is a 384-amino-acid chain: S-adenosylmethionine synthase (384 aa).

Residue H15 participates in ATP binding. Residue D17 participates in Mg(2+) binding. A K(+)-binding site is contributed by E43. Residues E56 and Q99 each contribute to the L-methionine site. Positions 99 to 109 (QSPDINQGVDR) are flexible loop. ATP-binding positions include 164-166 (DAK), 230-231 (RF), D239, 245-246 (RK), A262, and K266. D239 provides a ligand contact to L-methionine. Residue K270 coordinates L-methionine.

This sequence belongs to the AdoMet synthase family. Homotetramer; dimer of dimers. Mg(2+) is required as a cofactor. Requires K(+) as cofactor.

The protein localises to the cytoplasm. The enzyme catalyses L-methionine + ATP + H2O = S-adenosyl-L-methionine + phosphate + diphosphate. The protein operates within amino-acid biosynthesis; S-adenosyl-L-methionine biosynthesis; S-adenosyl-L-methionine from L-methionine: step 1/1. Functionally, catalyzes the formation of S-adenosylmethionine (AdoMet) from methionine and ATP. The overall synthetic reaction is composed of two sequential steps, AdoMet formation and the subsequent tripolyphosphate hydrolysis which occurs prior to release of AdoMet from the enzyme. The polypeptide is S-adenosylmethionine synthase (Erwinia tasmaniensis (strain DSM 17950 / CFBP 7177 / CIP 109463 / NCPPB 4357 / Et1/99)).